Here is a 335-residue protein sequence, read N- to C-terminus: MVREKVTVSTRTLQWKCVESRTDSKRLYYGRFILSPLTKGQADTIGIAMRRALLAEIEGTRITRVKFANTSHEYSTIAGIQESVHEILMNLKEIVLRSNLYGTCDASISIKGPGYVTAEDIILPPHVEIVDSTQHIAWLTEPINFFIGLKIERNHGYFIKTHANFEDGSYPIDALFMPVRNANHSINSYGNEKQEILFLEIWTNGSLTPKEALHEASRNLIDLFIPFLHMEEENLHLEDADHTIPLSPFTVYDKVAKLRKNKKKLSLESIFIDQLEFPPKIYNCLKKSNIFTLLDLLNNSQEDLIKIEHFHLEDVKQILGILGKHFALDLPKNLN.

The tract at residues 1–231 (MVREKVTVST…DLFIPFLHME (231 aa)) is alpha N-terminal domain (alpha-NTD). The interval 262 to 335 (KKKLSLESIF…FALDLPKNLN (74 aa)) is alpha C-terminal domain (alpha-CTD).

The protein belongs to the RNA polymerase alpha chain family. In terms of assembly, in plastids the minimal PEP RNA polymerase catalytic core is composed of four subunits: alpha, beta, beta', and beta''. When a (nuclear-encoded) sigma factor is associated with the core the holoenzyme is formed, which can initiate transcription.

Its subcellular location is the plastid. It carries out the reaction RNA(n) + a ribonucleoside 5'-triphosphate = RNA(n+1) + diphosphate. Its function is as follows. DNA-dependent RNA polymerase catalyzes the transcription of DNA into RNA using the four ribonucleoside triphosphates as substrates. The polypeptide is DNA-directed RNA polymerase subunit alpha (Cuscuta reflexa (Southern Asian dodder)).